The sequence spans 295 residues: Pyridoxal 5'-phosphate synthase subunit PdxS (295 aa).

D-ribose 5-phosphate is bound at residue Asp25. The active-site Schiff-base intermediate with D-ribose 5-phosphate is the Lys82. A D-ribose 5-phosphate-binding site is contributed by Gly154. Arg166 is a D-glyceraldehyde 3-phosphate binding site. D-ribose 5-phosphate-binding positions include Gly215 and 236-237 (GS).

This sequence belongs to the PdxS/SNZ family. In the presence of PdxT, forms a dodecamer of heterodimers.

The enzyme catalyses aldehydo-D-ribose 5-phosphate + D-glyceraldehyde 3-phosphate + L-glutamine = pyridoxal 5'-phosphate + L-glutamate + phosphate + 3 H2O + H(+). It participates in cofactor biosynthesis; pyridoxal 5'-phosphate biosynthesis. Functionally, catalyzes the formation of pyridoxal 5'-phosphate from ribose 5-phosphate (RBP), glyceraldehyde 3-phosphate (G3P) and ammonia. The ammonia is provided by the PdxT subunit. Can also use ribulose 5-phosphate and dihydroxyacetone phosphate as substrates, resulting from enzyme-catalyzed isomerization of RBP and G3P, respectively. This is Pyridoxal 5'-phosphate synthase subunit PdxS from Staphylococcus carnosus (strain TM300).